A 375-amino-acid polypeptide reads, in one-letter code: Succinyl-diaminopimelate desuccinylase (375 aa).

Residue His-66 coordinates Zn(2+). The active site involves Asp-68. Residue Asp-99 coordinates Zn(2+). Glu-133 serves as the catalytic Proton acceptor. Positions 134, 162, and 348 each coordinate Zn(2+).

The protein belongs to the peptidase M20A family. DapE subfamily. Homodimer. Requires Zn(2+) as cofactor. The cofactor is Co(2+).

The enzyme catalyses N-succinyl-(2S,6S)-2,6-diaminopimelate + H2O = (2S,6S)-2,6-diaminopimelate + succinate. It functions in the pathway amino-acid biosynthesis; L-lysine biosynthesis via DAP pathway; LL-2,6-diaminopimelate from (S)-tetrahydrodipicolinate (succinylase route): step 3/3. Catalyzes the hydrolysis of N-succinyl-L,L-diaminopimelic acid (SDAP), forming succinate and LL-2,6-diaminopimelate (DAP), an intermediate involved in the bacterial biosynthesis of lysine and meso-diaminopimelic acid, an essential component of bacterial cell walls. This Janthinobacterium sp. (strain Marseille) (Minibacterium massiliensis) protein is Succinyl-diaminopimelate desuccinylase.